The following is a 24-amino-acid chain: 33.0 kDa cold shock protein (24 aa).

The protein belongs to the thaumatin family. As to quaternary structure, homooligomer; disulfide-linked. Glycosylated.

Its subcellular location is the secreted. It localises to the extracellular space. The protein localises to the apoplast. This chain is 33.0 kDa cold shock protein, found in Arachis hypogaea (Peanut).